We begin with the raw amino-acid sequence, 109 residues long: uncharacterized protein (109 aa).

It is found in the mitochondrion. This is an uncharacterized protein from Saccharomyces cerevisiae (strain ATCC 204508 / S288c) (Baker's yeast).